We begin with the raw amino-acid sequence, 137 residues long: Small ribosomal subunit protein uS11 (137 aa).

The span at Met-1 to Arg-11 shows a compositional bias: low complexity. Positions Met-1–Gln-32 are disordered. Residues Arg-12–Arg-21 show a composition bias toward basic residues.

The protein belongs to the universal ribosomal protein uS11 family. In terms of assembly, part of the 30S ribosomal subunit. Interacts with proteins S7 and S18. Binds to IF-3.

Located on the platform of the 30S subunit, it bridges several disparate RNA helices of the 16S rRNA. Forms part of the Shine-Dalgarno cleft in the 70S ribosome. This chain is Small ribosomal subunit protein uS11, found in Herpetosiphon aurantiacus (strain ATCC 23779 / DSM 785 / 114-95).